The primary structure comprises 174 residues: Shikimate kinase 2 (174 aa).

12–17 (GCGKTT) is a binding site for ATP. 2 residues coordinate Mg(2+): Thr16 and Asp32. Substrate-binding residues include Asp34, Arg58, and Gly79. Residues 112–126 (RAYPEDDQRPSLTGK) form an LID domain region. Arg120 provides a ligand contact to ATP. Arg139 is a binding site for substrate. Gln155 is an ATP binding site.

The protein belongs to the shikimate kinase family. AroL subfamily. Monomer. Requires Mg(2+) as cofactor.

It is found in the cytoplasm. It catalyses the reaction shikimate + ATP = 3-phosphoshikimate + ADP + H(+). Its pathway is metabolic intermediate biosynthesis; chorismate biosynthesis; chorismate from D-erythrose 4-phosphate and phosphoenolpyruvate: step 5/7. Its function is as follows. Catalyzes the specific phosphorylation of the 3-hydroxyl group of shikimic acid using ATP as a cosubstrate. The sequence is that of Shikimate kinase 2 from Sodalis glossinidius (strain morsitans).